The sequence spans 206 residues: Octanoyltransferase (206 aa).

Residues 30-206 enclose the BPL/LPL catalytic domain; that stretch reads PETNDEIWLV…EFVTLLNNSI (177 aa). Residues 69-76, 137-139, and 150-152 each bind substrate; these read RGGQVTYH, SLG, and GIA. Residue cysteine 168 is the Acyl-thioester intermediate of the active site.

This sequence belongs to the LipB family.

Its subcellular location is the cytoplasm. It carries out the reaction octanoyl-[ACP] + L-lysyl-[protein] = N(6)-octanoyl-L-lysyl-[protein] + holo-[ACP] + H(+). Its pathway is protein modification; protein lipoylation via endogenous pathway; protein N(6)-(lipoyl)lysine from octanoyl-[acyl-carrier-protein]: step 1/2. Its function is as follows. Catalyzes the transfer of endogenously produced octanoic acid from octanoyl-acyl-carrier-protein onto the lipoyl domains of lipoate-dependent enzymes. Lipoyl-ACP can also act as a substrate although octanoyl-ACP is likely to be the physiological substrate. The polypeptide is Octanoyltransferase (Francisella tularensis subsp. holarctica (strain FTNF002-00 / FTA)).